The following is a 575-amino-acid chain: Arginine--tRNA ligase (575 aa).

The 'HIGH' region motif lies at 136-146; it reads ANPTGPLHVGH.

It belongs to the class-I aminoacyl-tRNA synthetase family. In terms of assembly, monomer.

The protein resides in the cytoplasm. It carries out the reaction tRNA(Arg) + L-arginine + ATP = L-arginyl-tRNA(Arg) + AMP + diphosphate. This Polynucleobacter necessarius subsp. necessarius (strain STIR1) protein is Arginine--tRNA ligase.